The following is a 352-amino-acid chain: tRNA pseudouridine synthase D (352 aa).

Catalysis depends on Asp81, which acts as the Nucleophile. One can recognise a TRUD domain in the interval 157–303 (GIPNYFGAQR…MSHERRILRL (147 aa)).

This sequence belongs to the pseudouridine synthase TruD family.

The catalysed reaction is uridine(13) in tRNA = pseudouridine(13) in tRNA. In terms of biological role, responsible for synthesis of pseudouridine from uracil-13 in transfer RNAs. The sequence is that of tRNA pseudouridine synthase D from Pseudomonas fluorescens (strain Pf0-1).